Here is a 317-residue protein sequence, read N- to C-terminus: Transaldolase (317 aa).

The active-site Schiff-base intermediate with substrate is the Lys-132.

It belongs to the transaldolase family. Type 1 subfamily. As to quaternary structure, homodimer.

The protein resides in the cytoplasm. The enzyme catalyses D-sedoheptulose 7-phosphate + D-glyceraldehyde 3-phosphate = D-erythrose 4-phosphate + beta-D-fructose 6-phosphate. Its pathway is carbohydrate degradation; pentose phosphate pathway; D-glyceraldehyde 3-phosphate and beta-D-fructose 6-phosphate from D-ribose 5-phosphate and D-xylulose 5-phosphate (non-oxidative stage): step 2/3. In terms of biological role, transaldolase is important for the balance of metabolites in the pentose-phosphate pathway. This Shewanella amazonensis (strain ATCC BAA-1098 / SB2B) protein is Transaldolase.